A 334-amino-acid chain; its full sequence is Ketol-acid reductoisomerase (NADP(+)) (334 aa).

The KARI N-terminal Rossmann domain maps to 2–181; it reads TKVYYDETVT…GATRAGVIET (180 aa). NADP(+) contacts are provided by residues 25–28, Arg48, Ser52, and 82–85; these read YGSQ and DEIQ. The active site involves His107. Position 133 (Gly133) interacts with NADP(+). In terms of domain architecture, KARI C-terminal knotted spans 182–327; sequence TFKEETETDL…RELREMMPFI (146 aa). 4 residues coordinate Mg(2+): Asp190, Glu194, Glu226, and Glu230. Ser251 provides a ligand contact to substrate.

This sequence belongs to the ketol-acid reductoisomerase family. Mg(2+) serves as cofactor.

It carries out the reaction (2R)-2,3-dihydroxy-3-methylbutanoate + NADP(+) = (2S)-2-acetolactate + NADPH + H(+). The catalysed reaction is (2R,3R)-2,3-dihydroxy-3-methylpentanoate + NADP(+) = (S)-2-ethyl-2-hydroxy-3-oxobutanoate + NADPH + H(+). Its pathway is amino-acid biosynthesis; L-isoleucine biosynthesis; L-isoleucine from 2-oxobutanoate: step 2/4. The protein operates within amino-acid biosynthesis; L-valine biosynthesis; L-valine from pyruvate: step 2/4. In terms of biological role, involved in the biosynthesis of branched-chain amino acids (BCAA). Catalyzes an alkyl-migration followed by a ketol-acid reduction of (S)-2-acetolactate (S2AL) to yield (R)-2,3-dihydroxy-isovalerate. In the isomerase reaction, S2AL is rearranged via a Mg-dependent methyl migration to produce 3-hydroxy-3-methyl-2-ketobutyrate (HMKB). In the reductase reaction, this 2-ketoacid undergoes a metal-dependent reduction by NADPH to yield (R)-2,3-dihydroxy-isovalerate. In Staphylococcus epidermidis (strain ATCC 35984 / DSM 28319 / BCRC 17069 / CCUG 31568 / BM 3577 / RP62A), this protein is Ketol-acid reductoisomerase (NADP(+)).